Consider the following 547-residue polypeptide: Chaperonin GroEL 1 (547 aa).

ATP-binding positions include threonine 30–proline 33, lysine 51, aspartate 87–threonine 91, glycine 415, and aspartate 496.

It belongs to the chaperonin (HSP60) family. Forms a cylinder of 14 subunits composed of two heptameric rings stacked back-to-back. Interacts with the co-chaperonin GroES.

It localises to the cytoplasm. It catalyses the reaction ATP + H2O + a folded polypeptide = ADP + phosphate + an unfolded polypeptide.. Its function is as follows. Together with its co-chaperonin GroES, plays an essential role in assisting protein folding. The GroEL-GroES system forms a nano-cage that allows encapsulation of the non-native substrate proteins and provides a physical environment optimized to promote and accelerate protein folding. In Gluconacetobacter diazotrophicus (strain ATCC 49037 / DSM 5601 / CCUG 37298 / CIP 103539 / LMG 7603 / PAl5), this protein is Chaperonin GroEL 1.